The primary structure comprises 492 residues: Cyclic di-GMP phosphodiesterase VC_1295 (492 aa).

A run of 6 helical transmembrane segments spans residues I14–Y34, E49–L69, F80–N100, L111–S131, L160–I180, and E205–S225. The 53-residue stretch at R226–N278 folds into the HAMP domain. The HD-GYP domain occupies V280–D490.

It localises to the cell inner membrane. The enzyme catalyses 3',3'-c-di-GMP + 2 H2O = 2 GMP + 2 H(+). Functionally, phosphodiesterase (PDE) that catalyzes the hydrolysis of cyclic diguanylate (c-di-GMP) to GMP in vitro. Increases motility and decreases biofilm formation in vivo. The sequence is that of Cyclic di-GMP phosphodiesterase VC_1295 from Vibrio cholerae serotype O1 (strain ATCC 39315 / El Tor Inaba N16961).